A 473-amino-acid polypeptide reads, in one-letter code: Photosystem II CP43 reaction center protein (473 aa).

Residues 1–14 (MKILYSPRRFYPVE) constitute a propeptide that is removed on maturation. Position 15 is an N-acetylthreonine (Thr-15). Residue Thr-15 is modified to Phosphothreonine. A run of 5 helical transmembrane segments spans residues 69-93 (LFEV…PHLA), 134-155 (IIGP…KDKN), 178-200 (KALY…RKIT), 255-275 (KPFA…LSYS), and 291-312 (WFNN…ASQA). Glu-367 contributes to the [CaMn4O5] cluster binding site. A helical transmembrane segment spans residues 447–471 (RARAAAAGFEKGIDRDFEPVLSTTP).

The protein belongs to the PsbB/PsbC family. PsbC subfamily. PSII is composed of 1 copy each of membrane proteins PsbA, PsbB, PsbC, PsbD, PsbE, PsbF, PsbH, PsbI, PsbJ, PsbK, PsbL, PsbM, PsbT, PsbX, PsbY, PsbZ, Psb30/Ycf12, at least 3 peripheral proteins of the oxygen-evolving complex and a large number of cofactors. It forms dimeric complexes. The cofactor is Binds multiple chlorophylls and provides some of the ligands for the Ca-4Mn-5O cluster of the oxygen-evolving complex. It may also provide a ligand for a Cl- that is required for oxygen evolution. PSII binds additional chlorophylls, carotenoids and specific lipids..

The protein resides in the plastid. It localises to the chloroplast thylakoid membrane. In terms of biological role, one of the components of the core complex of photosystem II (PSII). It binds chlorophyll and helps catalyze the primary light-induced photochemical processes of PSII. PSII is a light-driven water:plastoquinone oxidoreductase, using light energy to abstract electrons from H(2)O, generating O(2) and a proton gradient subsequently used for ATP formation. The protein is Photosystem II CP43 reaction center protein of Huperzia lucidula (Shining clubmoss).